Consider the following 261-residue polypeptide: Glandular kallikrein-7, submandibular/renal (261 aa).

A signal peptide spans 1-18; sequence MWFLILFLDLSLGQIDAA. Residues 19–24 constitute a propeptide, activation peptide; it reads PPGQSR. One can recognise a Peptidase S1 domain in the interval 25–258; the sequence is VIGGYKCEKN…FTSWIKEVMK (234 aa). Intrachain disulfides connect C31/C173, C50/C66, C152/C219, C184/C198, and C209/C234. Catalysis depends on H65, which acts as the Charge relay system. N108 carries N-linked (GlcNAc...) asparagine glycosylation. D120 (charge relay system) is an active-site residue. S213 acts as the Charge relay system in catalysis.

Belongs to the peptidase S1 family. Kallikrein subfamily. Kidney and submandibular gland. Not expressed in liver, pancreas, spleen, parotid, testis, cortex, prostate, ovary and pituitary.

The enzyme catalyses Preferential cleavage of Arg-|-Xaa bonds in small molecule substrates. Highly selective action to release kallidin (lysyl-bradykinin) from kininogen involves hydrolysis of Met-|-Xaa or Leu-|-Xaa.. In terms of biological role, glandular kallikreins cleave Met-Lys and Arg-Ser bonds in kininogen to release Lys-bradykinin. Predominant kallikrein protein in the kidney. This Rattus norvegicus (Rat) protein is Glandular kallikrein-7, submandibular/renal (Klk7).